The primary structure comprises 964 residues: Siderophore exporter MmpL5 (964 aa).

The next 12 membrane-spanning stretches (helical) occupy residues 31-51 (FAVP…VTVP), 203-223 (SLQV…LLVY), 230-250 (AIML…VAFL), 255-275 (IIGL…AAAT), 302-322 (MFGG…GATF), 340-360 (AIGM…IIAV), 389-409 (WPGP…LTLP), 773-793 (TYDL…IMLI), 803-823 (VIVG…VLIW), 826-846 (ILGI…LLAV), 880-900 (VVTA…VSEL), and 923-943 (SFMT…PQVV).

Belongs to the resistance-nodulation-cell division (RND) (TC 2.A.6) family. MmpL subfamily. As to quaternary structure, interacts with MmpS5.

Its subcellular location is the cell inner membrane. Part of an export system, which is required for biosynthesis and secretion of siderophores. The polypeptide is Siderophore exporter MmpL5 (mmpL5) (Mycobacterium tuberculosis (strain CDC 1551 / Oshkosh)).